The chain runs to 227 residues: Venom allergen 5 (227 aa).

Positions 1-21 (MKISCLICLVIVLTIIHLSQA) are cleaved as a signal peptide. Disulfide bonds link C25–C37, C29–C125, C49–C117, and C193–C210. Residues 69–212 (EEHNRFRQKV…MQIHYLICNY (144 aa)) enclose the SCP domain.

The protein belongs to the CRISP family. Venom allergen 5-like subfamily. As to expression, expressed by the venom gland.

Its subcellular location is the secreted. This Polistes dominula (European paper wasp) protein is Venom allergen 5.